A 172-amino-acid polypeptide reads, in one-letter code: Adenine phosphoribosyltransferase (172 aa).

The protein belongs to the purine/pyrimidine phosphoribosyltransferase family. In terms of assembly, homodimer.

Its subcellular location is the cytoplasm. It catalyses the reaction AMP + diphosphate = 5-phospho-alpha-D-ribose 1-diphosphate + adenine. It functions in the pathway purine metabolism; AMP biosynthesis via salvage pathway; AMP from adenine: step 1/1. Its function is as follows. Catalyzes a salvage reaction resulting in the formation of AMP, that is energically less costly than de novo synthesis. This Gloeothece citriformis (strain PCC 7424) (Cyanothece sp. (strain PCC 7424)) protein is Adenine phosphoribosyltransferase.